The chain runs to 113 residues: UPF0060 membrane protein Mmcs_2513 (113 aa).

The next 4 helical transmembrane spans lie at 12 to 32 (ALFV…WQGV), 37 to 57 (GWIW…VAAF), 66 to 86 (ILAA…VVVD), and 92 to 112 (RWDL…MYAP).

It belongs to the UPF0060 family.

Its subcellular location is the cell membrane. In Mycobacterium sp. (strain MCS), this protein is UPF0060 membrane protein Mmcs_2513.